A 254-amino-acid polypeptide reads, in one-letter code: Triosephosphate isomerase (254 aa).

12–14 contacts substrate; that stretch reads NWK. His-99 (electrophile) is an active-site residue. Glu-169 acts as the Proton acceptor in catalysis. Residues Gly-175, Ser-214, and 235–236 contribute to the substrate site; that span reads GG.

Belongs to the triosephosphate isomerase family. Homodimer.

The protein resides in the cytoplasm. The catalysed reaction is D-glyceraldehyde 3-phosphate = dihydroxyacetone phosphate. Its pathway is carbohydrate biosynthesis; gluconeogenesis. The protein operates within carbohydrate degradation; glycolysis; D-glyceraldehyde 3-phosphate from glycerone phosphate: step 1/1. Functionally, involved in the gluconeogenesis. Catalyzes stereospecifically the conversion of dihydroxyacetone phosphate (DHAP) to D-glyceraldehyde-3-phosphate (G3P). The sequence is that of Triosephosphate isomerase from Brucella melitensis biotype 1 (strain ATCC 23456 / CCUG 17765 / NCTC 10094 / 16M).